The following is a 364-amino-acid chain: MAQQTPLYEQHTLCGARMVDFHGWMMPLHYGSQIDEHHAVRTDAGMFDVSHMTIVDLHGSRTREFLRYLLANDVAKLTKSGKALYSGMLNASGGVIDDLIVYYFTEDFFRLVVNSATREKDLSWITQHAEPFGIEITVRDDLSMIAVQGPNAQAKAATLFNDAQRQAVEGMKPFFGVQAGDLFIATTGYTGEAGYEIALPNEKAADFWRALVEAGVKPCGLGARDTLRLEAGMNLYSQEMDETISPLAANMGWTIAWEPADRDFIGREALEAQREHGTEKLVGLVMTEKGVLRNELPVRFTDAQGNQHEGIITSGTFSPTLGYSIALARVPEGIGETAIVQIRNREMPVKVTKPVFVRNGKAVA.

It belongs to the GcvT family. The glycine cleavage system is composed of four proteins: P, T, L and H.

It catalyses the reaction N(6)-[(R)-S(8)-aminomethyldihydrolipoyl]-L-lysyl-[protein] + (6S)-5,6,7,8-tetrahydrofolate = N(6)-[(R)-dihydrolipoyl]-L-lysyl-[protein] + (6R)-5,10-methylene-5,6,7,8-tetrahydrofolate + NH4(+). Its function is as follows. The glycine cleavage system catalyzes the degradation of glycine. In Escherichia coli O6:H1 (strain CFT073 / ATCC 700928 / UPEC), this protein is Aminomethyltransferase.